The primary structure comprises 157 residues: 3-dehydroquinate dehydratase (157 aa).

Y24 (proton acceptor) is an active-site residue. N75, H81, and D88 together coordinate substrate. The active-site Proton donor is H101. Residues 102–103 (LS) and R112 contribute to the substrate site.

The protein belongs to the type-II 3-dehydroquinase family. As to quaternary structure, homododecamer.

It carries out the reaction 3-dehydroquinate = 3-dehydroshikimate + H2O. It participates in metabolic intermediate biosynthesis; chorismate biosynthesis; chorismate from D-erythrose 4-phosphate and phosphoenolpyruvate: step 3/7. Functionally, catalyzes a trans-dehydration via an enolate intermediate. The sequence is that of 3-dehydroquinate dehydratase from Brucella canis (strain ATCC 23365 / NCTC 10854 / RM-666).